Here is a 170-residue protein sequence, read N- to C-terminus: Copper transporter 1 (170 aa).

Residues 1 to 29 (MDHDHMHGMPRPSSSSSSSPSSMMNNGSM) form a disordered region. Positions 9–29 (MPRPSSSSSSSPSSMMNNGSM) are enriched in low complexity. A run of 2 helical transmembrane segments spans residues 65-85 (GMYA…EWLA) and 114-134 (IGLA…VFLV).

It belongs to the copper transporter (Ctr) (TC 1.A.56) family. SLC31A subfamily. In terms of tissue distribution, expressed in the root apex, lateral root primordia, embryo, trichomes, guard cells and pollen grains.

It is found in the membrane. In terms of biological role, copper transporter involved in copper acquisition and transport in leaves. Required for copper homeostasis and normal plant growth and development. In Arabidopsis thaliana (Mouse-ear cress), this protein is Copper transporter 1 (COPT1).